The sequence spans 391 residues: 4-hydroxy-3-methylbut-2-en-1-yl diphosphate synthase (flavodoxin) (391 aa).

The [4Fe-4S] cluster site is built by Cys-282, Cys-285, Cys-317, and Glu-324.

Belongs to the IspG family. The cofactor is [4Fe-4S] cluster.

It carries out the reaction (2E)-4-hydroxy-3-methylbut-2-enyl diphosphate + oxidized [flavodoxin] + H2O + 2 H(+) = 2-C-methyl-D-erythritol 2,4-cyclic diphosphate + reduced [flavodoxin]. Its pathway is isoprenoid biosynthesis; isopentenyl diphosphate biosynthesis via DXP pathway; isopentenyl diphosphate from 1-deoxy-D-xylulose 5-phosphate: step 5/6. Its function is as follows. Converts 2C-methyl-D-erythritol 2,4-cyclodiphosphate (ME-2,4cPP) into 1-hydroxy-2-methyl-2-(E)-butenyl 4-diphosphate. This Acidothermus cellulolyticus (strain ATCC 43068 / DSM 8971 / 11B) protein is 4-hydroxy-3-methylbut-2-en-1-yl diphosphate synthase (flavodoxin).